The sequence spans 763 residues: Elongation factor G, mitochondrial (763 aa).

A mitochondrion-targeting transit peptide spans 1 to 52; sequence MFMRLKVLEMNSIRRQTLLRQFTNVYNVVSRSARLCSQAIPKRLFYSTGSRA. The tr-type G domain maps to 60 to 347; that stretch reads SRLRNIGISA…AVCDYLPNPS (288 aa). Residues 69–76, 145–149, and 199–202 each bind GTP; these read AHIDSGKT, DTPGH, and NKMD.

Belongs to the TRAFAC class translation factor GTPase superfamily. Classic translation factor GTPase family. EF-G/EF-2 subfamily.

It localises to the mitochondrion. It functions in the pathway protein biosynthesis; polypeptide chain elongation. Functionally, mitochondrial GTPase that catalyzes the GTP-dependent ribosomal translocation step during translation elongation. During this step, the ribosome changes from the pre-translocational (PRE) to the post-translocational (POST) state as the newly formed A-site-bound peptidyl-tRNA and P-site-bound deacylated tRNA move to the P and E sites, respectively. Catalyzes the coordinated movement of the two tRNA molecules, the mRNA and conformational changes in the ribosome. In Schizosaccharomyces japonicus (strain yFS275 / FY16936) (Fission yeast), this protein is Elongation factor G, mitochondrial (mef1).